Consider the following 143-residue polypeptide: Small ribosomal subunit protein uS9 (143 aa).

The segment at 118–143 (DSRRTEPHKPNRSTKGPRAKRQKSYR) is disordered. The segment covering 127-143 (PNRSTKGPRAKRQKSYR) has biased composition (basic residues).

The protein belongs to the universal ribosomal protein uS9 family.

This chain is Small ribosomal subunit protein uS9, found in Thermococcus sibiricus (strain DSM 12597 / MM 739).